The chain runs to 391 residues: Pyridinium-3,5-bisthiocarboxylic acid mononucleotide nickel insertion protein (391 aa).

This sequence belongs to the LarC family.

It carries out the reaction Ni(II)-pyridinium-3,5-bisthiocarboxylate mononucleotide = pyridinium-3,5-bisthiocarboxylate mononucleotide + Ni(2+). Functionally, involved in the biosynthesis of a nickel-pincer cofactor ((SCS)Ni(II) pincer complex). Binds Ni(2+), and functions in nickel delivery to pyridinium-3,5-bisthiocarboxylic acid mononucleotide (P2TMN), to form the mature cofactor. Is thus probably required for the activation of nickel-pincer cofactor-dependent enzymes. The protein is Pyridinium-3,5-bisthiocarboxylic acid mononucleotide nickel insertion protein of Staphylococcus saprophyticus subsp. saprophyticus (strain ATCC 15305 / DSM 20229 / NCIMB 8711 / NCTC 7292 / S-41).